Here is a 314-residue protein sequence, read N- to C-terminus: DNA-directed RNA polymerase subunit alpha (314 aa).

An alpha N-terminal domain (alpha-NTD) region spans residues 1 to 228 (MAQFHYECVE…SLFEPLKDIT (228 aa)). Positions 240 to 314 (DPTSQIPIEE…LPQEKVAKAT (75 aa)) are alpha C-terminal domain (alpha-CTD).

The protein belongs to the RNA polymerase alpha chain family. In terms of assembly, in cyanobacteria the RNAP catalytic core is composed of 2 alpha, 1 beta, 1 beta', 1 gamma and 1 omega subunit. When a sigma factor is associated with the core the holoenzyme is formed, which can initiate transcription.

It carries out the reaction RNA(n) + a ribonucleoside 5'-triphosphate = RNA(n+1) + diphosphate. Functionally, DNA-dependent RNA polymerase catalyzes the transcription of DNA into RNA using the four ribonucleoside triphosphates as substrates. The sequence is that of DNA-directed RNA polymerase subunit alpha from Trichodesmium erythraeum (strain IMS101).